Here is a 277-residue protein sequence, read N- to C-terminus: NLP effector protein Pc109095 (277 aa).

The first 19 residues, 1 to 19 (MKFIFAFVLCLAVAQTALG), serve as a signal peptide directing secretion. The short motif at 119 to 125 (RSRHLWA) is the Hepta-peptide GHRHDWE motif element. Asparagine 199 is a glycosylation site (N-linked (GlcNAc...) asparagine).

It belongs to the Necrosis inducing protein (NPP1) family.

The protein resides in the secreted. Functionally, secreted effector that contributes strongly to virulence during infection by P.capsici. The sequence is that of NLP effector protein Pc109095 from Phytophthora capsici.